The primary structure comprises 775 residues: Metal transporter CNNM4 (775 aa).

Residues 1-178 lie on the Extracellular side of the membrane; the sequence is MAPVGGGGRP…LLFMVEEPGR (178 aa). N-linked (GlcNAc...) asparagine glycosylation is found at asparagine 85 and asparagine 122. Residues 178-358 form the CNNM transmembrane domain; it reads RFLPLWLHIL…EPYNDLVKEE (181 aa). Residues 179-199 form a helical membrane-spanning segment; the sequence is FLPLWLHILLITVLLVLSGIF. Residues 200–240 are Cytoplasmic-facing; sequence SGLNLGLMALDPMELRIVQNCGTEKERRYARKIEPIRRKGN. An intramembrane region (helical) is located at residues 241–261; that stretch reads YLLCSLLLGNVLVNTSLTILL. Residues 262–264 lie on the Cytoplasmic side of the membrane; the sequence is DNL. A helical transmembrane segment spans residues 265 to 285; it reads IGSGLMAVASSTIGIVIFGEI. The Extracellular segment spans residues 286 to 293; that stretch reads LPQALCSR. A helical membrane pass occupies residues 294-316; sequence HGLAVGANTILLTKFFMLLTFPL. Topologically, residues 317–775 are cytoplasmic; that stretch reads SFPISKLLDF…LHKASHENAI (459 aa). 2 consecutive CBS domains span residues 377-438 and 445-511; these read MTQL…CTPL and YNHP…ILDE. Phosphoserine occurs at positions 660, 664, and 770.

The protein belongs to the ACDP family. As to quaternary structure, interacts with COX11. In terms of tissue distribution, widely expressed. Highly expressed in heart.

The protein resides in the cell membrane. Its function is as follows. Probable metal transporter. The interaction with the metal ion chaperone COX11 suggests that it may play a role in sensory neuron functions. May play a role in biomineralization and retinal function. This chain is Metal transporter CNNM4 (CNNM4), found in Homo sapiens (Human).